A 196-amino-acid chain; its full sequence is Proteasome subunit beta 1 (196 aa).

A propeptide spans 1 to 6 (MEELPA) (removed in mature form; by autocatalysis). Residue T7 is the Nucleophile of the active site.

It belongs to the peptidase T1B family. As to quaternary structure, the 20S proteasome core is composed of 14 alpha and 14 beta subunits that assemble into four stacked heptameric rings, resulting in a barrel-shaped structure. The two inner rings, each composed of seven catalytic beta subunits, are sandwiched by two outer rings, each composed of seven alpha subunits. The catalytic chamber with the active sites is on the inside of the barrel. Has a gated structure, the ends of the cylinder being occluded by the N-termini of the alpha-subunits. Is capped at one or both ends by the proteasome regulatory ATPase, PAN.

Its subcellular location is the cytoplasm. The catalysed reaction is Cleavage of peptide bonds with very broad specificity.. Its activity is regulated as follows. The formation of the proteasomal ATPase PAN-20S proteasome complex, via the docking of the C-termini of PAN into the intersubunit pockets in the alpha-rings, triggers opening of the gate for substrate entry. Interconversion between the open-gate and close-gate conformations leads to a dynamic regulation of the 20S proteasome proteolysis activity. Its function is as follows. Component of the proteasome core, a large protease complex with broad specificity involved in protein degradation. This chain is Proteasome subunit beta 1, found in Saccharolobus islandicus (strain Y.N.15.51 / Yellowstone #2) (Sulfolobus islandicus).